Reading from the N-terminus, the 216-residue chain is MDNRTAIIKQPDNISSFHDVYKLQKEYQEALILDNSNPDFIWIGEHQLCYTLGRGSNYDNLLFSLNDAKYDVFKIDRGGEVTCHMPGQLVTYLVLDLKNFNKDLNWYLRKIEEIIIKILGAFNIDCHSRKGFTGVWIGNKKIASIGIGCKKWITINGFSINIDCELENFNKIVPCGIENCLMANMIDYNKNLNIQEVKRIVKKTIEEEFNFDFISK.

In terms of domain architecture, BPL/LPL catalytic spans 35-213; sequence NSNPDFIWIG…TIEEEFNFDF (179 aa). Substrate is bound by residues 77 to 84, 144 to 146, and 157 to 159; these read RGGEVTCH, SIG, and GFS. The active-site Acyl-thioester intermediate is the Cys-175.

The protein belongs to the LipB family.

It localises to the cytoplasm. It carries out the reaction octanoyl-[ACP] + L-lysyl-[protein] = N(6)-octanoyl-L-lysyl-[protein] + holo-[ACP] + H(+). The protein operates within protein modification; protein lipoylation via endogenous pathway; protein N(6)-(lipoyl)lysine from octanoyl-[acyl-carrier-protein]: step 1/2. Functionally, catalyzes the transfer of endogenously produced octanoic acid from octanoyl-acyl-carrier-protein onto the lipoyl domains of lipoate-dependent enzymes. Lipoyl-ACP can also act as a substrate although octanoyl-ACP is likely to be the physiological substrate. The protein is Octanoyltransferase of Prochlorococcus marinus (strain MIT 9301).